The primary structure comprises 401 residues: Heat stress transcription factor A-4a (401 aa).

The DNA-binding element occupies 13–107 (LPPFLTKTYE…LMKNIHRRKP (95 aa)). The segment at 122–188 (PLTDSERVRM…TMVSFVSQVL (67 aa)) is hydrophobic repeat HR-A/B. The Nuclear localization signal motif lies at 207-213 (RKRRFPR). Residues 256–265 (IAIWENLVSD) carry the AHA1 motif. The AHA2 signature appears at 341-350 (DGFWQQFFSE). The disordered stretch occupies residues 351 to 373 (NPGSTEQREVQLERKDDKDKAGV). The span at 356 to 373 (EQREVQLERKDDKDKAGV) shows a compositional bias: basic and acidic residues. The Nuclear export signal signature appears at 388–395 (ITEQLGHL).

It belongs to the HSF family. Class A subfamily. Homotrimer. In terms of processing, exhibits temperature-dependent phosphorylation.

It localises to the cytoplasm. The protein resides in the nucleus. Functionally, transcriptional activator that specifically binds DNA sequence 5'-AGAAnnTTCT-3' known as heat shock promoter elements (HSE). In Arabidopsis thaliana (Mouse-ear cress), this protein is Heat stress transcription factor A-4a (HSFA4A).